The chain runs to 339 residues: Glyceraldehyde-3-phosphate dehydrogenase (339 aa).

Residues Arg-12 to Ile-13, Asp-34, Arg-78, and Thr-120 each bind NAD(+). D-glyceraldehyde 3-phosphate-binding positions include Ser-149–Thr-151, Thr-180, Thr-209–Gly-210, and Arg-232. The active-site Nucleophile is Cys-150. NAD(+) is bound at residue Asn-319.

It belongs to the glyceraldehyde-3-phosphate dehydrogenase family. Homotetramer.

The protein localises to the cytoplasm. It carries out the reaction D-glyceraldehyde 3-phosphate + phosphate + NAD(+) = (2R)-3-phospho-glyceroyl phosphate + NADH + H(+). It participates in carbohydrate degradation; glycolysis; pyruvate from D-glyceraldehyde 3-phosphate: step 1/5. Its function is as follows. Catalyzes the oxidative phosphorylation of glyceraldehyde 3-phosphate (G3P) to 1,3-bisphosphoglycerate (BPG) using the cofactor NAD. The first reaction step involves the formation of a hemiacetal intermediate between G3P and a cysteine residue, and this hemiacetal intermediate is then oxidized to a thioester, with concomitant reduction of NAD to NADH. The reduced NADH is then exchanged with the second NAD, and the thioester is attacked by a nucleophilic inorganic phosphate to produce BPG. The chain is Glyceraldehyde-3-phosphate dehydrogenase (gapA) from Haemophilus influenzae (strain ATCC 51907 / DSM 11121 / KW20 / Rd).